We begin with the raw amino-acid sequence, 70 residues long: Eglin C (70 aa).

Belongs to the protease inhibitor I13 (potato type I serine protease inhibitor) family.

Inhibits both elastase and cathepsin G. The chain is Eglin C from Hirudo medicinalis (Medicinal leech).